Here is a 492-residue protein sequence, read N- to C-terminus: Malonate-semialdehyde dehydrogenase (492 aa).

Residues F156, K180, E183, K184, S233, and T255 each coordinate NAD(+). C288 functions as the Nucleophile in the catalytic mechanism. E387 lines the NAD(+) pocket.

It belongs to the aldehyde dehydrogenase family. IolA subfamily. In terms of assembly, homotetramer.

It catalyses the reaction 3-oxopropanoate + NAD(+) + CoA + H2O = hydrogencarbonate + acetyl-CoA + NADH + H(+). The enzyme catalyses 2-methyl-3-oxopropanoate + NAD(+) + CoA + H2O = propanoyl-CoA + hydrogencarbonate + NADH + H(+). It participates in polyol metabolism; myo-inositol degradation into acetyl-CoA; acetyl-CoA from myo-inositol: step 7/7. Catalyzes the oxidation of malonate semialdehyde (MSA) and methylmalonate semialdehyde (MMSA) into acetyl-CoA and propanoyl-CoA, respectively. Is involved in a myo-inositol catabolic pathway. Bicarbonate, and not CO2, is the end-product of the enzymatic reaction. This Lacticaseibacillus casei (Lactobacillus casei) protein is Malonate-semialdehyde dehydrogenase.